Reading from the N-terminus, the 425-residue chain is Orexin/Hypocretin receptor type 1 (425 aa).

Residues 1–25 (MEPSATPGPQMGVPTEGRERSPEPP) are disordered. At 1–46 (MEPSATPGPQMGVPTEGRERSPEPPDYEDEFLRYLWRDYLYPKQYE) the chain is on the extracellular side. A required for response to orexin-A region spans residues 26–41 (DYEDEFLRYLWRDYLY). Residues 47-67 (WVLIAAYVAVFFVALVGNTLV) traverse the membrane as a helical segment. The Cytoplasmic segment spans residues 68–82 (CLAVWRNHHMRTVTN). Residues 83–105 (YFIVNLSLADVLVTAICLPASLL) traverse the membrane as a helical segment. At 106–119 (VDITESWLFGHALC) the chain is on the extracellular side. Cysteines 119 and 202 form a disulfide. Residues 120–140 (KVIPYLQAVSVSVAVLTLSFI) form a helical membrane-spanning segment. The Cytoplasmic portion of the chain corresponds to 141-160 (ALDRWYAICHPLLFKSTARR). The helical transmembrane segment at 161 to 182 (ARGSILGIWAVSLAVMVPQAAV) threads the bilayer. Topologically, residues 183–213 (MECSSVLPELANRTRLFSVCDERWADDLYPK) are extracellular. N-linked (GlcNAc...) asparagine glycosylation is present at Asn194. A helical membrane pass occupies residues 214 to 235 (IYHSCFFIVTYLAPLGLMAMAY). Residues 236–298 (FQIFRKLWGR…QMRARRKTAK (63 aa)) are Cytoplasmic-facing. The chain crosses the membrane as a helical span at residues 299 to 321 (MLMVVLLVFALCYLPISVLNVLK). The Extracellular portion of the chain corresponds to 322–336 (RVFGMFRQASDREAV). The chain crosses the membrane as a helical span at residues 337–360 (YACFTFSHWLVYANSAANPIIYNF). Residues 361–425 (LSGKFREQFK…LLTSVTTVLP (65 aa)) lie on the Cytoplasmic side of the membrane.

The protein belongs to the G-protein coupled receptor 1 family.

The protein localises to the cell membrane. Functionally, moderately selective excitatory receptor for orexin-A and, with a lower affinity, for orexin-B neuropeptide. Triggers an increase in cytoplasmic Ca(2+) levels in response to orexin-A binding. The chain is Orexin/Hypocretin receptor type 1 from Bos taurus (Bovine).